Here is a 380-residue protein sequence, read N- to C-terminus: Cell division protein FtsZ 2 (380 aa).

Residues 47–51, 134–136, Glu-165, Arg-168, and Asp-211 contribute to the GTP site; these read GAGNN and GTG.

It belongs to the FtsZ family. In terms of assembly, homodimer. Polymerizes to form a dynamic ring structure in a strictly GTP-dependent manner. Interacts directly with several other division proteins.

The protein localises to the cytoplasm. Essential cell division protein that forms a contractile ring structure (Z ring) at the future cell division site. The regulation of the ring assembly controls the timing and the location of cell division. One of the functions of the FtsZ ring is to recruit other cell division proteins to the septum to produce a new cell wall between the dividing cells. Binds GTP and shows GTPase activity. This Methanocaldococcus jannaschii (strain ATCC 43067 / DSM 2661 / JAL-1 / JCM 10045 / NBRC 100440) (Methanococcus jannaschii) protein is Cell division protein FtsZ 2.